The sequence spans 199 residues: MPNYKLTYFNLRGRAEICRYLFAYAGIKYEDHRLEGADWPKIKPTIPFGKVPILEVDGVIIHQSLAIARYLARESGLAGQTPVEQALADAIVDTIDDFMMLFPWAEKNQDVKEKAFNDILTNKAPELLKDLDTFLGDKKWFVGKSVTWADFYWDVCSTTLLSYKADLADKYPRLLALRDRVEALPAIAAWIQKRPKTAI.

Residues 2 to 79 form the GST N-terminal domain; that stretch reads PNYKLTYFNL…YLARESGLAG (78 aa). Glutathione contacts are provided by residues Tyr8, Arg14, Trp39, 49–51, and 63–64; these read GKV and QS. Positions 81–199 constitute a GST C-terminal domain; that stretch reads TPVEQALADA…WIQKRPKTAI (119 aa).

Belongs to the GST superfamily. Sigma family. Requires glutathione as cofactor. In terms of tissue distribution, highly expressed in liver, kidney, small intestine and colon, moderately in pancreas, bone marrow, lung and ovary, and expressed at low levels in spleen, thymus, heart and brain. Not detected in oviduct or skin (at protein level). Expressed in liver.

It is found in the cytoplasm. It catalyses the reaction prostaglandin H2 = prostaglandin D2. The catalysed reaction is RX + glutathione = an S-substituted glutathione + a halide anion + H(+). It carries out the reaction 2-glyceryl-prostaglandin H2 = 2-glyceryl-prostaglandin D2. Functionally, bifunctional enzyme which catalyzes both the conversion of PGH2 to PGD2, a prostaglandin involved in smooth muscle contraction/relaxation and a potent inhibitor of platelet aggregation, and the conjugation of glutathione with a wide range of aryl halides, organic isothiocyanates and alpha,beta-unsaturated carbonyls. Also exhibits low glutathione-peroxidase activity towards cumene hydroperoxide and t-butyl hydroperoxide. This chain is Hematopoietic prostaglandin D synthase (HPGDS), found in Gallus gallus (Chicken).